Consider the following 179-residue polypeptide: Segregation and condensation protein B (179 aa).

The protein belongs to the ScpB family. As to quaternary structure, homodimer. Homodimerization may be required to stabilize the binding of ScpA to the Smc head domains. Component of a cohesin-like complex composed of ScpA, ScpB and the Smc homodimer, in which ScpA and ScpB bind to the head domain of Smc. The presence of the three proteins is required for the association of the complex with DNA.

It localises to the cytoplasm. Functionally, participates in chromosomal partition during cell division. May act via the formation of a condensin-like complex containing Smc and ScpA that pull DNA away from mid-cell into both cell halves. The polypeptide is Segregation and condensation protein B (Clostridioides difficile (strain 630) (Peptoclostridium difficile)).